Consider the following 127-residue polypeptide: 3-aminoacrylate deaminase RutC (127 aa).

Belongs to the RutC family.

The enzyme catalyses (Z)-3-aminoacrylate + H2O + H(+) = 3-oxopropanoate + NH4(+). In terms of biological role, involved in pyrimidine catabolism. Catalyzes the deamination of 3-aminoacrylate to malonic semialdehyde, a reaction that can also occur spontaneously. RutC may facilitate the reaction and modulate the metabolic fitness, rather than catalyzing essential functions. The polypeptide is 3-aminoacrylate deaminase RutC (Pseudomonas syringae pv. syringae (strain B728a)).